The chain runs to 526 residues: D-arabinono-1,4-lactone oxidase (526 aa).

One can recognise an FAD-binding PCMH-type domain in the interval 19–193 (YSAKPERYFQ…VSATIRVVPG (175 aa)). Pros-8alpha-FAD histidine is present on His56.

This sequence belongs to the oxygen-dependent FAD-linked oxidoreductase family. As to quaternary structure, monomer. The cofactor is FAD. The N-terminus is blocked.

It is found in the mitochondrion membrane. It carries out the reaction D-arabinono-1,4-lactone + O2 = dehydro-D-arabinono-1,4-lactone + H2O2 + H(+). The protein operates within cofactor biosynthesis; D-erythroascorbate biosynthesis; dehydro-D-arabinono-1,4-lactone from D-arabinose: step 2/2. In terms of biological role, can oxidize L-gulono-1,4-lactone as well as D-arabinono-1,4-lactone and L-galactono-1,4-lactone. This chain is D-arabinono-1,4-lactone oxidase (ALO1), found in Saccharomyces cerevisiae (strain ATCC 204508 / S288c) (Baker's yeast).